Here is a 149-residue protein sequence, read N- to C-terminus: Nucleoside diphosphate kinase (149 aa).

Residues K9, F57, R85, T91, R102, and N112 each contribute to the ATP site. The active-site Pros-phosphohistidine intermediate is H115.

The protein belongs to the NDK family. As to quaternary structure, homotetramer. Mg(2+) is required as a cofactor.

It localises to the cytoplasm. The enzyme catalyses a 2'-deoxyribonucleoside 5'-diphosphate + ATP = a 2'-deoxyribonucleoside 5'-triphosphate + ADP. It catalyses the reaction a ribonucleoside 5'-diphosphate + ATP = a ribonucleoside 5'-triphosphate + ADP. In terms of biological role, major role in the synthesis of nucleoside triphosphates other than ATP. The ATP gamma phosphate is transferred to the NDP beta phosphate via a ping-pong mechanism, using a phosphorylated active-site intermediate. The polypeptide is Nucleoside diphosphate kinase (Gloeobacter violaceus (strain ATCC 29082 / PCC 7421)).